A 495-amino-acid chain; its full sequence is Neuronal acetylcholine receptor subunit beta-4 (495 aa).

A signal peptide spans Met1 to Cys20. Residues Arg21 to Thr235 lie on the Extracellular side of the membrane. 4 N-linked (GlcNAc...) asparagine glycosylation sites follow: Asn35, Asn92, Asn137, and Asn165. A disulfide bond links Cys152 and Cys166. Residues Ile236 to Pro256 traverse the membrane as a helical segment. Residues Ser257–Thr264 are Cytoplasmic-facing. Glu261 lines the Na(+) pocket. A helical membrane pass occupies residues Leu265 to Pro285. At Pro286–Tyr297 the chain is on the extracellular side. A helical transmembrane segment spans residues Leu298 to Val318. Over His319–Arg463 the chain is Cytoplasmic. The chain crosses the membrane as a helical span at residues Leu464–Pro484. Residues Leu485 to Leu495 are Extracellular-facing.

The protein belongs to the ligand-gated ion channel (TC 1.A.9) family. Acetylcholine receptor (TC 1.A.9.1) subfamily. Beta-4/CHRNB4 sub-subfamily. As to quaternary structure, neuronal AChR is composed of two different types of subunits: alpha and beta. CHRNB4/Beta-4 subunit can be combined to CHRNA2/alpha-2, CHRNA3/alpha-3 or CHRNA4/alpha-4, CHRNA5/alpha-5 and CHRNB3/beta-3 to give rise to functional receptors. Forms stoichiometries such as (CHRNA3)2:(CHRNB4)3 or (CHRNA3:CHRNB4)2:CHRNB3. Interacts with RIC3; which is required for proper folding and assembly. Interacts with LYPD6. As to expression, predominantly expressed by immature T-cells in the thymus.

It is found in the synaptic cell membrane. The protein localises to the cell membrane. The enzyme catalyses K(+)(in) = K(+)(out). The catalysed reaction is Na(+)(in) = Na(+)(out). It catalyses the reaction Ca(2+)(in) = Ca(2+)(out). Its activity is regulated as follows. Activated by a myriad of ligands such as acetylcholine, cytisine, nicotine, choline and epibatidine. The heteropentamer CHRNA3:CHRNB4 activity is blocked by the alpha-conotoxin ImI and AuIB. In terms of biological role, component of neuronal acetylcholine receptors (nAChRs) that function as pentameric, ligand-gated cation channels with high calcium permeability among other activities. nAChRs are excitatory neurotrasnmitter receptors formed by a collection of nAChR subunits known to mediate synaptic transmission in the nervous system and the neuromuscular junction. Each nAchR subunit confers differential attributes to channel properties, including activation, deactivation and desensitization kinetics, pH sensitivity, cation permeability, and binding to allosteric modulators. CHRNB4 forms heteropentameric neuronal acetylcholine receptors with CHRNA2, CHRNA3 and CHRNA4, as well as CHRNA5 and CHRNB3 as accesory subunits. CHRNA3:CHRNB4 being predominant in neurons of the autonomic ganglia, it is known as ganglionic nicotinic receptor. CHRNA3:CHRNB4 or CHRNA3:CHRNA5:CHRNB4 play also an important role in the habenulo-interpeduncular tract, modulating the mesolimbic dopamine system and affecting reward circuits and addiction. Hypothalamic CHRNA3:CHRNB4 nAChR activation by nicotine leads to activation of POMC neurons and a decrease in food intake. In Mus musculus (Mouse), this protein is Neuronal acetylcholine receptor subunit beta-4 (Chrnb4).